The chain runs to 478 residues: DNA gyrase subunit B (478 aa).

The Toprim domain maps to 319–438 (CELYLVEGDS…QGYLYVALPP (120 aa)). 3 residues coordinate Mg(2+): glutamate 325, aspartate 403, and aspartate 405.

Belongs to the type II topoisomerase GyrB family. As to quaternary structure, heterotetramer, composed of two GyrA and two GyrB chains. In the heterotetramer, GyrA contains the active site tyrosine that forms a transient covalent intermediate with DNA, while GyrB binds cofactors and catalyzes ATP hydrolysis. Requires Mg(2+) as cofactor. Mn(2+) is required as a cofactor. Ca(2+) serves as cofactor.

It is found in the cytoplasm. The enzyme catalyses ATP-dependent breakage, passage and rejoining of double-stranded DNA.. A type II topoisomerase that negatively supercoils closed circular double-stranded (ds) DNA in an ATP-dependent manner to modulate DNA topology and maintain chromosomes in an underwound state. Negative supercoiling favors strand separation, and DNA replication, transcription, recombination and repair, all of which involve strand separation. Also able to catalyze the interconversion of other topological isomers of dsDNA rings, including catenanes and knotted rings. Type II topoisomerases break and join 2 DNA strands simultaneously in an ATP-dependent manner. The chain is DNA gyrase subunit B (gyrB) from Eisenibacter elegans (Flexibacter elegans).